Here is a 447-residue protein sequence, read N- to C-terminus: UPF0210 protein Ldb1026 (447 aa).

This sequence belongs to the UPF0210 family. In terms of assembly, homodimer.

The protein is UPF0210 protein Ldb1026 of Lactobacillus delbrueckii subsp. bulgaricus (strain ATCC 11842 / DSM 20081 / BCRC 10696 / JCM 1002 / NBRC 13953 / NCIMB 11778 / NCTC 12712 / WDCM 00102 / Lb 14).